The following is a 21-amino-acid chain: Major outer membrane protein P44 (21 aa).

Monomer.

The protein localises to the cell outer membrane. The protein is Major outer membrane protein P44 of Mannheimia haemolytica (Pasteurella haemolytica).